Consider the following 376-residue polypeptide: Chaperone protein DnaJ (376 aa).

The region spanning 5-70 (DYYEVLGVGR…DKKAAYDQFG (66 aa)) is the J domain. A CR-type zinc finger spans residues 132–210 (GLTKELRIPT…CHGDGRVEKS (79 aa)). Zn(2+)-binding residues include cysteine 145, cysteine 148, cysteine 162, cysteine 165, cysteine 184, cysteine 187, cysteine 198, and cysteine 201. 4 CXXCXGXG motif repeats span residues 145–152 (CDLCDGSG), 162–169 (CTTCHGQG), 184–191 (CPTCHGRG), and 198–205 (CTKCHGDG).

Belongs to the DnaJ family. In terms of assembly, homodimer. Requires Zn(2+) as cofactor.

It localises to the cytoplasm. In terms of biological role, participates actively in the response to hyperosmotic and heat shock by preventing the aggregation of stress-denatured proteins and by disaggregating proteins, also in an autonomous, DnaK-independent fashion. Unfolded proteins bind initially to DnaJ; upon interaction with the DnaJ-bound protein, DnaK hydrolyzes its bound ATP, resulting in the formation of a stable complex. GrpE releases ADP from DnaK; ATP binding to DnaK triggers the release of the substrate protein, thus completing the reaction cycle. Several rounds of ATP-dependent interactions between DnaJ, DnaK and GrpE are required for fully efficient folding. Also involved, together with DnaK and GrpE, in the DNA replication of plasmids through activation of initiation proteins. In Shewanella putrefaciens (strain CN-32 / ATCC BAA-453), this protein is Chaperone protein DnaJ.